A 232-amino-acid chain; its full sequence is Large ribosomal subunit protein uL1 (232 aa).

The protein belongs to the universal ribosomal protein uL1 family. As to quaternary structure, part of the 50S ribosomal subunit.

Its function is as follows. Binds directly to 23S rRNA. The L1 stalk is quite mobile in the ribosome, and is involved in E site tRNA release. Functionally, protein L1 is also a translational repressor protein, it controls the translation of the L11 operon by binding to its mRNA. The polypeptide is Large ribosomal subunit protein uL1 (Paraburkholderia phytofirmans (strain DSM 17436 / LMG 22146 / PsJN) (Burkholderia phytofirmans)).